Reading from the N-terminus, the 378-residue chain is Geraniol dehydrogenase (378 aa).

Residues Cys48, His75, Cys105, Cys108, Cys111, Cys119, and Cys179 each coordinate Zn(2+).

The protein belongs to the zinc-containing alcohol dehydrogenase family. Monomer. It depends on Zn(2+) as a cofactor.

It catalyses the reaction (2E)-geraniol + NAD(+) = (2E)-geranial + NADH + H(+). The catalysed reaction is (2E,6E)-farnesol + NAD(+) = (2E,6E)-farnesal + NADH + H(+). Its function is as follows. Catalyzes the NAD(+)-dependent oxidation of geraniol to geranial, playing an important role in the biosynthesis of neral, an alarm pheromone. Cannot use NADP(+). Also acts as a farnesol dehydrogenase by catalyzing the oxidation of (2E,6E)-farnesol to (2E,6E)-farnesal, with lower activity compared to geraniol dehydrogenase activity. The sequence is that of Geraniol dehydrogenase from Carpoglyphus lactis (Dried fruit mite).